The primary structure comprises 584 residues: MKFKSLITTTLALGVLASTGANFNNNEASAAAKPLDKSSSSLHHGYSKVHVPYAITVNGTSQNILSSLTFNKNQNISYKDLEDRVKSVLKSDRGISDIDLRLSKQAKYTVYFKNGTKKVIDLKAGIYTADLINTSEIKAININVDTKKQVEDKKKDKANYQVPYTITVNGTSQNILSNLTFNKNQNISYKDLEDKVKSVLESNRGITDVDLRLSKQAKYTVNFKNGTKKVIDLKSGIYTANLINSSDIKSININVDTKKHIENKAKRNYQVPYSINLNGTSTNILSNLSFSNKPWTNYKNLTSQIKSVLKHDRGISEQDLKYAKKAYYTVYFKNGGKRILQLNSKNYTANLVHAKDVKRIEITVKTGTKAKADRYVPYTIAVNGTSTPILSDLKFTGDPRVGYKDISKKVKSVLKHDRGIGERELKYAKKATYTVHFKNGTKKVININSNISQLNLLYVQDIKKIDIDVKTGTKAKADSYVPYTIAVNGTSTPILSKLKISNKQLISYKYLNDKVKSVLKSERGISDLDLKFAKQAKYTVYFKNGKKQVVNLKSDIFTPNLFSAKDIKKIDIDVKQYTKSKKNK.

The signal sequence occupies residues 1 to 30; the sequence is MKFKSLITTTLALGVLASTGANFNNNEASA. 5 MAP repeats span residues 45-154, 156-265, 266-374, 375-474, and 475-584; these read GYSK…EDKK, DKAN…ENKA, KRNY…KADR, YVPY…TGTK, and AKAD…KKNK.

The protein localises to the cell membrane. Functionally, binds various plasma and ECM-proteins. This Staphylococcus aureus (strain Newman) protein is 65 kDa membrane protein.